We begin with the raw amino-acid sequence, 365 residues long: Cytochrome P450 71A3 (365 aa).

Belongs to the cytochrome P450 family. Heme is required as a cofactor.

In terms of biological role, may have a role in maturation, such as during flavor formation or other metabolite production specific to aging tissues. The protein is Cytochrome P450 71A3 (CYP71A3) of Solanum melongena (Eggplant).